Reading from the N-terminus, the 568-residue chain is Peptidoglycan D,D-transpeptidase FtsI (568 aa).

A helical membrane pass occupies residues 19–39 (FVTLCSIVFLFLVILTLRIIF). The Acyl-ester intermediate role is filled by S302.

The protein belongs to the transpeptidase family. FtsI subfamily.

Its subcellular location is the cell inner membrane. The catalysed reaction is Preferential cleavage: (Ac)2-L-Lys-D-Ala-|-D-Ala. Also transpeptidation of peptidyl-alanyl moieties that are N-acyl substituents of D-alanine.. It participates in cell wall biogenesis; peptidoglycan biosynthesis. Functionally, catalyzes cross-linking of the peptidoglycan cell wall at the division septum. The protein is Peptidoglycan D,D-transpeptidase FtsI of Buchnera aphidicola subsp. Schizaphis graminum (strain Sg).